The following is a 282-amino-acid chain: Small ribosomal subunit protein uS2 (282 aa).

A disordered region spans residues 260 to 282; sequence KRRRSKVYKEEEREVVTNEDESR. Over residues 266–282 the composition is skewed to basic and acidic residues; it reads VYKEEEREVVTNEDESR.

This sequence belongs to the universal ribosomal protein uS2 family.

The chain is Small ribosomal subunit protein uS2 from Wolbachia sp. subsp. Drosophila simulans (strain wRi).